We begin with the raw amino-acid sequence, 293 residues long: AM-toxin biosynthesis protein 14 (293 aa).

A run of 5 helical transmembrane segments spans residues 33–53 (SATA…EVYI), 73–93 (IAVN…ALVL), 148–168 (GVLA…LCVW), 183–203 (LVPI…LWIL), and 221–241 (VWCL…TPLT).

The protein localises to the membrane. It functions in the pathway mycotoxin biosynthesis. Part of the gene clusters that mediate the biosynthesis of AM-toxins, host-selective toxins (HSTs) causing Alternaria blotch on apple, a worldwide distributed disease. AM-toxins are cyclic depsipeptides containing the 3 residues 2-hydroxy-isovaleric acid (2-HIV), dehydroalanine, L-alanine which are common for all 3 AM-toxins I to III. The fourth precursor is L-alpha-amino-methoxyphenyl-valeric acid (L-Amv) for AM-toxin I, L-alpha-amino-phenyl-valeric acid (L-Apv) for AM-toxin II, and L-alpha-amino-hydroxyphenyl-valeric acid (L-Ahv) for AM-toxin III. AM-toxins have two target sites for affecting susceptible apple cells; they cause invagination of the plasma membrane and electrolyte loss and chloroplast disorganization. The non-ribosomal peptide synthetase AMT1 contains 4 catalytic modules and is responsible for activation of each residue in AM-toxin. The aldo-keto reductase AMT2 catalyzes the conversion of 2-keto-isovaleric acid (2-KIV) to 2-hydroxy-isovaleric acid (2-HIV), one of the precursor residues incorporated by AMT1 during AM-toxin biosynthesis, by reduction of its ketone to an alcohol. The cytochrome P450 monooxygenase AMT3 and the thioesterase AMT4 are also important for AM-toxin production, but their exact function within the AM-toxin biosynthesis are not known yet. Up to 21 proteins (including AMT1 to AMT4) are predicted to be involved in AM-toxin biosynthesis since their expression ishighly up-regulated in AM-toxin-producing cultures. This Alternaria alternata (Alternaria rot fungus) protein is AM-toxin biosynthesis protein 14.